A 636-amino-acid polypeptide reads, in one-letter code: Biosynthetic arginine decarboxylase (636 aa).

The residue at position 101 (lysine 101) is an N6-(pyridoxal phosphate)lysine. 286–296 is a substrate binding site; the sequence is FDVGGGLAVDY.

Belongs to the Orn/Lys/Arg decarboxylase class-II family. SpeA subfamily. Requires Mg(2+) as cofactor. The cofactor is pyridoxal 5'-phosphate.

It carries out the reaction L-arginine + H(+) = agmatine + CO2. It functions in the pathway amine and polyamine biosynthesis; agmatine biosynthesis; agmatine from L-arginine: step 1/1. Its function is as follows. Catalyzes the biosynthesis of agmatine from arginine. This chain is Biosynthetic arginine decarboxylase, found in Shewanella denitrificans (strain OS217 / ATCC BAA-1090 / DSM 15013).